The chain runs to 280 residues: Small ribosomal subunit protein uS3 (280 aa).

One can recognise a KH type-2 domain in the interval 38–106 (IRKLLATGLE…QVQLNILEVK (69 aa)). Positions 216 to 280 (AAAPAADRPR…SAGQPETTES (65 aa)) are disordered. Positions 237–270 (SGASGTTATSTDAGRAASEGTVEAPATEAAATAP) are enriched in low complexity.

Belongs to the universal ribosomal protein uS3 family. In terms of assembly, part of the 30S ribosomal subunit. Forms a tight complex with proteins S10 and S14.

Its function is as follows. Binds the lower part of the 30S subunit head. Binds mRNA in the 70S ribosome, positioning it for translation. The protein is Small ribosomal subunit protein uS3 of Mycolicibacterium vanbaalenii (strain DSM 7251 / JCM 13017 / BCRC 16820 / KCTC 9966 / NRRL B-24157 / PYR-1) (Mycobacterium vanbaalenii).